Here is a 395-residue protein sequence, read N- to C-terminus: Probable beta-1,3-galactosyltransferase 8 (395 aa).

The helical; Signal-anchor for type II membrane protein transmembrane segment at 5 to 27 (AASGKAIIVLCLASFLAGSLFMS) threads the bilayer. Asparagine 117 carries an N-linked (GlcNAc...) asparagine glycan.

It belongs to the glycosyltransferase 31 family. It depends on Mn(2+) as a cofactor.

Its subcellular location is the golgi apparatus membrane. The protein operates within protein modification; protein glycosylation. Beta-1,3-galactosyltransferase that transfers galactose from UDP-galactose to substrates with a terminal glycosyl residue. This is Probable beta-1,3-galactosyltransferase 8 (B3GALT8) from Arabidopsis thaliana (Mouse-ear cress).